The primary structure comprises 140 residues: Type II secretion system core protein G (140 aa).

A propeptide spans 1–6 (MQRQRG) (leader sequence). N-methylphenylalanine is present on phenylalanine 7. A helical membrane pass occupies residues 7-27 (FTLLEIMVVIVILGVLASLVV). Positions 120–140 (LGPDGVPESNDDIGNWTIGKK) are disordered.

The protein belongs to the GSP G family. In terms of assembly, type II secretion system is composed of four main components: the outer membrane complex, the inner membrane complex, the cytoplasmic secretion ATPase and the periplasm-spanning pseudopilus. Forms homomultimers. In terms of processing, cleaved by the prepilin peptidase. Post-translationally, methylated by prepilin peptidase at the amino group of the N-terminal phenylalanine once the leader sequence is cleaved.

The protein resides in the cell inner membrane. Functionally, core component of the type II secretion system required for the energy-dependent secretion of extracellular factors such as proteases and toxins from the periplasm. Pseudopilin (pilin-like) protein that polymerizes to form the pseudopilus. Further polymerization triggers pseudopilus growth. The polypeptide is Type II secretion system core protein G (pulG) (Klebsiella pneumoniae).